The sequence spans 110 residues: uncharacterized protein (110 aa).

This is an uncharacterized protein from Yersinia enterocolitica.